Reading from the N-terminus, the 513-residue chain is MKAGCSIVEKPEGGGGYQFPDWAYKAESSPGSRQIQLWHFILELLQKEEFRHVIAWQQGEYGEFVIKDPDEVARLWGRRKCKPQMNYDKLSRALRYYYNKRILHKTKGKRFTYKFNFNKLVMPNYPFINIRSSGVVPQSAPPVPTASSRFHFPPLDSHSPTGDVQPGRFSASSLSASGPESGVTTDRKVEPSDLEDGSASDWHRGMDFMPSRNALGGGAVGHQKRKPDILLPLFTRPAMYPDPHSPFAISPVPGRGGVLNVPISPALSLTPTMFSYSPSPGLSPFTSSSCFSFNPEEMKHYLHSQACSVFNYHLSPRTFPRYPGLMVPPLQCQMHPEEPSQFSIKLQPPPAGRKNRERVESREEAVRGSVPASAPVPSRIKVEPATEKDPDSLRQSTQGKEEQTQEVDSMRSRTIEEGKGTGFAHPSPTWPSVSISTPSDEPLEGTEDSEDRSVREPGVPEKKEDALMPPKLRLKRRWNDDPEARELNKTGKFLWNGAGPQGLATTATAAADA.

The segment at residues 35-116 is a DNA-binding region (ETS); it reads IQLWHFILEL…KGKRFTYKFN (82 aa). Positions 138–202 are disordered; the sequence is QSAPPVPTAS…DLEDGSASDW (65 aa). Phosphoserine occurs at positions 139, 159, and 315. The interval 333-513 is disordered; sequence QMHPEEPSQF…ATTATAAADA (181 aa). Basic and acidic residues-rich tracts occupy residues 357-366, 380-392, and 399-419; these read ERVESREEAV, IKVEPATEKDPDS, and GKEEQTQEVDSMRSRTIEEGK. Lys381 is covalently cross-linked (Glycyl lysine isopeptide (Lys-Gly) (interchain with G-Cter in SUMO2)). Lys388 is subject to N6-acetyllysine; alternate. Lys388 is covalently cross-linked (Glycyl lysine isopeptide (Lys-Gly) (interchain with G-Cter in SUMO2); alternate). Residues 430–439 are compositionally biased toward polar residues; the sequence is WPSVSISTPS. Positions 441-450 are enriched in acidic residues; the sequence is EPLEGTEDSE. Basic and acidic residues-rich tracts occupy residues 451–466 and 477–489; these read DRSVREPGVPEKKEDA and RWNDDPEARELNK. Residues 504–513 are compositionally biased toward low complexity; it reads ATTATAAADA.

Belongs to the ETS family.

It localises to the nucleus. Its function is as follows. Transcriptional repressor that contribute to growth arrest during terminal macrophage differentiation by repressing target genes involved in Ras-dependent proliferation. Represses MMP1 promoter activity. The polypeptide is ETS translocation variant 3 (Etv3) (Mus musculus (Mouse)).